The primary structure comprises 312 residues: MELQFLGTGAGQPSKQRNVSSVALKLLDELNEIWLFDVGEATQHQILRTNIRLRKVTKIFISHNHGDHIFGLPGLLSTRSFQGDVGPLTIYGPPGIEQFVKVSLKVSRTKVSYPIKFVELTKPGLICEDKGFRVYTDRLDHRIPSFGFRVVEDSHPGELLIDKLAKYNIPNGPLLGQLKRGDQVTLADGTVLNGKDFLGAEKPGRIVTIIYDTRSTPSIARLAKDADVLVHESTFAGDEAKMAHNYYHSTSVQAAKIAKQENVKKLCLSHISARYMGNKAKKLESQAKKVFPNTILVNDFDQINIPMKGSEK.

7 residues coordinate Zn(2+): His63, His65, Asp67, His68, His141, Asp212, and His270. The active-site Proton acceptor is the Asp67.

The protein belongs to the RNase Z family. Homodimer. The cofactor is Zn(2+).

It catalyses the reaction Endonucleolytic cleavage of RNA, removing extra 3' nucleotides from tRNA precursor, generating 3' termini of tRNAs. A 3'-hydroxy group is left at the tRNA terminus and a 5'-phosphoryl group is left at the trailer molecule.. Functionally, zinc phosphodiesterase, which displays some tRNA 3'-processing endonuclease activity. Probably involved in tRNA maturation, by removing a 3'-trailer from precursor tRNA. In Lactobacillus helveticus (strain DPC 4571), this protein is Ribonuclease Z.